The primary structure comprises 240 residues: RNA polymerase sigma factor SigI (240 aa).

The Polymerase core binding motif lies at Asp56 to Ile69. The H-T-H motif DNA-binding region spans Leu194 to Lys213.

It belongs to the sigma-70 factor family. SigI subfamily. Interacts with RsgI.

Its subcellular location is the cytoplasm. Its activity is regulated as follows. Negatively regulated by the anti-sigma-I factor RsgI. Its function is as follows. Sigma factors are initiation factors that promote the attachment of RNA polymerase to specific initiation sites and are then released. This sigma factor contributes to both stress response and virulence gene expression. The chain is RNA polymerase sigma factor SigI from Bacillus anthracis.